A 104-amino-acid chain; its full sequence is Ribonuclease P protein component 4 (104 aa).

The Zn(2+) site is built by cysteine 63, cysteine 66, cysteine 89, and cysteine 92.

This sequence belongs to the eukaryotic/archaeal RNase P protein component 4 family. In terms of assembly, consists of a catalytic RNA component and at least 4-5 protein subunits. Zn(2+) serves as cofactor.

The protein localises to the cytoplasm. It carries out the reaction Endonucleolytic cleavage of RNA, removing 5'-extranucleotides from tRNA precursor.. Its function is as follows. Part of ribonuclease P, a protein complex that generates mature tRNA molecules by cleaving their 5'-ends. The polypeptide is Ribonuclease P protein component 4 (Methanoregula boonei (strain DSM 21154 / JCM 14090 / 6A8)).